We begin with the raw amino-acid sequence, 572 residues long: ATP-dependent lipid A-core flippase (572 aa).

5 helical membrane passes run 14–34 (IIPYKIPLFIAMFAMIVVAAL), 55–75 (VFFLQILPLIIIAIFFTKGVL), 148–168 (IFLLGVIFYMNWKLALICFLI), 249–269 (MEIIGGFAVAGIIWVGGSEVI), and 272–292 (SATPGTFFAFLTAMITAYDPV). Residues 22-304 (FIAMFAMIVV…VSQVNSTIQQ (283 aa)) form the ABC transmembrane type-1 domain. One can recognise an ABC transporter domain in the interval 338-571 (IEFHDVSFSY…EGEYQLLYNM (234 aa)). 370-377 (GPSGGGKT) serves as a coordination point for ATP.

It belongs to the ABC transporter superfamily. Lipid exporter (TC 3.A.1.106) family. In terms of assembly, homodimer.

The protein localises to the cell inner membrane. The enzyme catalyses ATP + H2O + lipid A-core oligosaccharideSide 1 = ADP + phosphate + lipid A-core oligosaccharideSide 2.. Involved in lipopolysaccharide (LPS) biosynthesis. Translocates lipid A-core from the inner to the outer leaflet of the inner membrane. Transmembrane domains (TMD) form a pore in the inner membrane and the ATP-binding domain (NBD) is responsible for energy generation. This Desulfotalea psychrophila (strain LSv54 / DSM 12343) protein is ATP-dependent lipid A-core flippase.